Consider the following 472-residue polypeptide: Arginine biosynthesis bifunctional protein ArgJ, mitochondrial (472 aa).

Substrate-binding residues include Thr200, Lys229, Thr240, Glu327, Asn467, and Thr472. The Nucleophile role is filled by Thr240.

It belongs to the ArgJ family. Heterodimer of an alpha and a beta chain. Post-translationally, the alpha and beta chains are autoproteolytically processed from a single precursor protein within the mitochondrion.

The protein localises to the mitochondrion matrix. The enzyme catalyses N(2)-acetyl-L-ornithine + L-glutamate = N-acetyl-L-glutamate + L-ornithine. The catalysed reaction is L-glutamate + acetyl-CoA = N-acetyl-L-glutamate + CoA + H(+). It functions in the pathway amino-acid biosynthesis; L-arginine biosynthesis; L-ornithine and N-acetyl-L-glutamate from L-glutamate and N(2)-acetyl-L-ornithine (cyclic): step 1/1. Its pathway is amino-acid biosynthesis; L-arginine biosynthesis; N(2)-acetyl-L-ornithine from L-glutamate: step 1/4. In terms of biological role, catalyzes two activities which are involved in the cyclic version of arginine biosynthesis: the synthesis of acetylglutamate from glutamate and acetyl-CoA, and of ornithine by transacetylation between acetylornithine and glutamate. The polypeptide is Arginine biosynthesis bifunctional protein ArgJ, mitochondrial (Talaromyces marneffei (strain ATCC 18224 / CBS 334.59 / QM 7333) (Penicillium marneffei)).